Consider the following 1024-residue polypeptide: Beta-galactosidase (1024 aa).

Substrate is bound by residues Asn-103 and Asp-202. Residue Asp-202 participates in Na(+) binding. 3 residues coordinate Mg(2+): Glu-417, His-419, and Glu-462. Substrate contacts are provided by residues Glu-462 and Glu-538–His-541. Residue Glu-462 is the Proton donor of the active site. The active-site Nucleophile is Glu-538. Asn-598 is a Mg(2+) binding site. Na(+) contacts are provided by Phe-602 and Asn-605. Positions 605 and 1000 each coordinate substrate.

The protein belongs to the glycosyl hydrolase 2 family. In terms of assembly, homotetramer. The cofactor is Mg(2+). Na(+) is required as a cofactor.

The catalysed reaction is Hydrolysis of terminal non-reducing beta-D-galactose residues in beta-D-galactosides.. The sequence is that of Beta-galactosidase from Escherichia coli O6:K15:H31 (strain 536 / UPEC).